Reading from the N-terminus, the 139-residue chain is D-ribose pyranase (139 aa).

His20 acts as the Proton donor in catalysis. Residues Asp28, His106, and Tyr128–Asn130 contribute to the substrate site.

The protein belongs to the RbsD / FucU family. RbsD subfamily. Homodecamer.

Its subcellular location is the cytoplasm. The catalysed reaction is beta-D-ribopyranose = beta-D-ribofuranose. It functions in the pathway carbohydrate metabolism; D-ribose degradation; D-ribose 5-phosphate from beta-D-ribopyranose: step 1/2. Its function is as follows. Catalyzes the interconversion of beta-pyran and beta-furan forms of D-ribose. The chain is D-ribose pyranase from Maridesulfovibrio salexigens (strain ATCC 14822 / DSM 2638 / NCIMB 8403 / VKM B-1763) (Desulfovibrio salexigens).